Reading from the N-terminus, the 287-residue chain is MTTLTGKTVLLTGASRGLGVYIARALAKEQATVVCVSRSQSGLAQTCNAVKAAGGKAIAIPFDVRNTSQLSALVQQAQDIVGPIDVLINNAGIEINGTFANYSLAEIQSIFNTNLLAAMELTRLLLPSMMERGSGRIVNIASLAGKKGVAFNSVYSASKAGLIMWTDAMRQELVGTGVNISVVCPGYVSQTGMTVDTRVSAPKLAGISTPKSVANAVVKAIKNKTTEVIVNQNPITESLTKLMLAVGQISPTSVDRIYRWFGVVDFNQKRAENRVKDGYVAVESHRS.

11–35 serves as a coordination point for NAD(+); that stretch reads LTGASRGLGVYIARALAKEQATVVC. Residue S142 coordinates substrate. Y155 functions as the Proton acceptor in the catalytic mechanism.

This sequence belongs to the short-chain dehydrogenases/reductases (SDR) family.

May be involved in repressing heterocyst differentiation and may be essential for preventing all vegetative cells from differentiating. The protein is Ketoacyl reductase HetN (hetN) of Nostoc sp. (strain PCC 7120 / SAG 25.82 / UTEX 2576).